The sequence spans 1848 residues: Chitin synthase E (1848 aa).

The segment covering 1-17 has biased composition (low complexity); the sequence is MAAPSPAGGAPSHAQSS. The tract at residues 1–22 is disordered; sequence MAAPSPAGGAPSHAQSSLPSLP. A Myosin motor domain is found at 1 to 779; that stretch reads MAAPSPAGGA…CWADLAKVGE (779 aa). 102-109 contacts ATP; sequence GESGSGKT. Residues 593–621 are disordered; it reads SSKPLRMPSMARRKTSPSSRLAFDAGDAD. Residues 659–683 are actin-binding; sequence LDIVNKCLSSTNLNPYFIFCLKPND. Transmembrane regions (helical) follow at residues 889 to 909 and 928 to 948; these read WIALVYLLTFYIPDFAIKLFG and LIIWFSCGVAIFFIVAFPGLV. The Cytochrome b5 heme-binding domain occupies 952-1040; it reads QHVYSAAELS…LLDYRPTNIS (89 aa). 2 N-linked (GlcNAc...) asparagine glycosylation sites follow: Asn-1038 and Asn-1063. Residues 1200–1220 traverse the membrane as a helical segment; the sequence is FILAISVLICSIIVFKFLAAL. 3 N-linked (GlcNAc...) asparagine glycosylation sites follow: Asn-1423, Asn-1457, and Asn-1563. The next 3 helical transmembrane spans lie at 1595–1615, 1621–1641, and 1648–1668; these read LSTVIQPVTLAYIIYLIYWLV, IPYTSLILLAAIYGLQALIFI, and MVGWMIVYLLALPVFSLALPL. The N-linked (GlcNAc...) asparagine glycan is linked to Asn-1786. The DEK-C domain maps to 1790–1845; the sequence is LPSDDAILAEIREILRTADLMSVTKKSIKLELERRFGVNLDLKRPYINSATEAVLA.

It in the N-terminal section; belongs to the TRAFAC class myosin-kinesin ATPase superfamily. Myosin family. The protein in the C-terminal section; belongs to the chitin synthase family. Class V subfamily.

Its subcellular location is the cell membrane. The protein localises to the cell septum. It is found in the cell tip. The catalysed reaction is [(1-&gt;4)-N-acetyl-beta-D-glucosaminyl](n) + UDP-N-acetyl-alpha-D-glucosamine = [(1-&gt;4)-N-acetyl-beta-D-glucosaminyl](n+1) + UDP + H(+). In terms of biological role, polymerizes chitin, a structural polymer of the cell wall and septum, by transferring the sugar moiety of UDP-GlcNAc to the non-reducing end of the growing chitin polymer. Important for hyphal growth and conidiophore development but not pathogenicity. The sequence is that of Chitin synthase E from Aspergillus fumigatus (strain ATCC MYA-4609 / CBS 101355 / FGSC A1100 / Af293) (Neosartorya fumigata).